The following is a 514-amino-acid chain: Beta-glucosidase 21 (514 aa).

Positions 1–25 (MERPLHLLLVFLSSPWLLLLQGVSS) are cleaved as a signal peptide. Gln47 and His147 together coordinate a beta-D-glucoside. Catalysis depends on Glu193, which acts as the Proton donor. Cys212 and Cys220 are joined by a disulfide. Asn219 and Asn224 each carry an N-linked (GlcNAc...) asparagine glycan. A beta-D-glucoside is bound by residues Tyr336 and Glu406. Glu406 (nucleophile) is an active-site residue. Asn407 carries an N-linked (GlcNAc...) asparagine glycan. Positions 448 and 465 each coordinate a beta-D-glucoside. Asn494 carries an N-linked (GlcNAc...) asparagine glycan.

Belongs to the glycosyl hydrolase 1 family.

It carries out the reaction Hydrolysis of terminal, non-reducing beta-D-glucosyl residues with release of beta-D-glucose.. In Oryza sativa subsp. japonica (Rice), this protein is Beta-glucosidase 21 (BGLU21).